Reading from the N-terminus, the 695-residue chain is Elongation factor G 1 (695 aa).

One can recognise a tr-type G domain in the interval 6–284; the sequence is KKVRNIGISA…VTRYLPCPAD (279 aa). Residues 15–22, 82–86, and 136–139 each bind GTP; these read AHIDSGKT, DTPGH, and NKCD.

The protein belongs to the TRAFAC class translation factor GTPase superfamily. Classic translation factor GTPase family. EF-G/EF-2 subfamily.

It is found in the cytoplasm. Functionally, catalyzes the GTP-dependent ribosomal translocation step during translation elongation. During this step, the ribosome changes from the pre-translocational (PRE) to the post-translocational (POST) state as the newly formed A-site-bound peptidyl-tRNA and P-site-bound deacylated tRNA move to the P and E sites, respectively. Catalyzes the coordinated movement of the two tRNA molecules, the mRNA and conformational changes in the ribosome. The sequence is that of Elongation factor G 1 from Syntrophus aciditrophicus (strain SB).